Consider the following 342-residue polypeptide: scyllo-inositol 2-dehydrogenase (NAD(+)) (342 aa).

Belongs to the Gfo/Idh/MocA family.

The enzyme catalyses scyllo-inositol + NAD(+) = scyllo-inosose + NADH + H(+). It functions in the pathway polyol metabolism. In terms of biological role, catalyzes the reversible NAD(+)-dependent oxidation of scyllo-inositol (SI) to 2,4,6/3,5-pentahydroxycyclohexanone (scyllo-inosose or SIS). Is required for SI catabolism that allows B.subtilis to utilize SI as the sole carbon source for growth. Cannot use NADP(+) instead of NAD(+). In Bacillus subtilis (strain 168), this protein is scyllo-inositol 2-dehydrogenase (NAD(+)).